Reading from the N-terminus, the 206-residue chain is Alpha-S1-casein (206 aa).

An N-terminal signal peptide occupies residues 1-15 (MKLLIFICLAAVALA). Ser33, Ser77, Ser78, Ser79, Ser80, Ser81, Ser82, and Ser89 each carry phosphoserine. The disordered stretch occupies residues 67–106 (HGMEGHEQRGSSSSSSEEVVGNSAEQKHVQKEEDVPSQSY). Residues 91 to 100 (EQKHVQKEED) show a composition bias toward basic and acidic residues.

Belongs to the alpha-casein family. As to expression, mammary gland specific. Secreted in milk.

The protein localises to the secreted. Functionally, important role in the capacity of milk to transport calcium phosphate. This Sus scrofa (Pig) protein is Alpha-S1-casein (CSN1S1).